The chain runs to 130 residues: Cholecystokinin (130 aa).

The signal sequence occupies residues 1–20 (MYIGICICVLLAALSASSTG). A propeptide spanning residues 21–60 (QQTVGSMNEDPGAREIEQQNILQHPRHIRASSSAQLKPFQ) is cleaved from the precursor. Tyr112 is subject to Sulfotyrosine. Residue Phe118 is modified to Phenylalanine amide. Positions 122-130 (SAEEYEYSS) are excised as a propeptide. Tyr126 and Tyr128 each carry sulfotyrosine.

Belongs to the gastrin/cholecystokinin family. In terms of processing, the precursor is cleaved by proteases to produce a number of active cholecystokinins. Expressed in brain, lung, testis and throughout the length of the small intestine. In the brain, expressed predominantly in the optic tectum and brain stem.

Its subcellular location is the secreted. Functionally, this peptide hormone induces gall bladder contraction and the release of pancreatic enzymes in the gut. Its function in the brain is not clear. The polypeptide is Cholecystokinin (CCK) (Aquarana catesbeiana (American bullfrog)).